A 428-amino-acid chain; its full sequence is 3-phosphoshikimate 1-carboxyvinyltransferase (428 aa).

Residues Lys-20, Ser-21, and Arg-25 each coordinate 3-phosphoshikimate. Lys-20 contacts phosphoenolpyruvate. Gly-92 and Arg-120 together coordinate phosphoenolpyruvate. 4 residues coordinate 3-phosphoshikimate: Ser-166, Gln-168, Asp-314, and Lys-341. Gln-168 contributes to the phosphoenolpyruvate binding site. Asp-314 acts as the Proton acceptor in catalysis. Positions 345 and 387 each coordinate phosphoenolpyruvate.

It belongs to the EPSP synthase family. In terms of assembly, monomer.

Its subcellular location is the cytoplasm. It catalyses the reaction 3-phosphoshikimate + phosphoenolpyruvate = 5-O-(1-carboxyvinyl)-3-phosphoshikimate + phosphate. The protein operates within metabolic intermediate biosynthesis; chorismate biosynthesis; chorismate from D-erythrose 4-phosphate and phosphoenolpyruvate: step 6/7. Its function is as follows. Catalyzes the transfer of the enolpyruvyl moiety of phosphoenolpyruvate (PEP) to the 5-hydroxyl of shikimate-3-phosphate (S3P) to produce enolpyruvyl shikimate-3-phosphate and inorganic phosphate. In Listeria monocytogenes serotype 4b (strain CLIP80459), this protein is 3-phosphoshikimate 1-carboxyvinyltransferase.